Consider the following 129-residue polypeptide: Large ribosomal subunit protein bL20 (129 aa).

Belongs to the bacterial ribosomal protein bL20 family.

In terms of biological role, binds directly to 23S ribosomal RNA and is necessary for the in vitro assembly process of the 50S ribosomal subunit. It is not involved in the protein synthesizing functions of that subunit. The chain is Large ribosomal subunit protein bL20 from Rhodococcus jostii (strain RHA1).